The primary structure comprises 490 residues: Chromosomal replication initiator protein DnaA (490 aa).

The segment at 1–91 (MTMKGGVASQ…GELWAAHDAT (91 aa)) is domain I, interacts with DnaA modulators. A domain II region spans residues 91–147 (TGRRIDLKSRLEFEAAAGAYVEATPKAVAAEPIEIVLPVSTDAPTVVAPSAKSPRTQ). The segment at 148 to 370 (GLQERFTFET…GALNTLSARA (223 aa)) is domain III, AAA+ region. Gly-192, Gly-194, Lys-195, and Thr-196 together coordinate ATP. The interval 371-490 (GEGLSRMTLD…LETLTRKLRG (120 aa)) is domain IV, binds dsDNA.

The protein belongs to the DnaA family. In terms of assembly, oligomerizes as a right-handed, spiral filament on DNA at oriC.

Its subcellular location is the cytoplasm. Plays an essential role in the initiation and regulation of chromosomal replication. ATP-DnaA binds to the origin of replication (oriC) to initiate formation of the DNA replication initiation complex once per cell cycle. Binds the DnaA box (a 9 base pair repeat at the origin) and separates the double-stranded (ds)DNA. Forms a right-handed helical filament on oriC DNA; dsDNA binds to the exterior of the filament while single-stranded (ss)DNA is stabiized in the filament's interior. The ATP-DnaA-oriC complex binds and stabilizes one strand of the AT-rich DNA unwinding element (DUE), permitting loading of DNA polymerase. After initiation quickly degrades to an ADP-DnaA complex that is not apt for DNA replication. Binds acidic phospholipids. The sequence is that of Chromosomal replication initiator protein DnaA from Caulobacter vibrioides (strain ATCC 19089 / CIP 103742 / CB 15) (Caulobacter crescentus).